The following is a 113-amino-acid chain: UPF0482 protein YnfB (113 aa).

The signal sequence occupies residues 1-28 (MKITLSKRIGLLAFLLPCALALSTTVHA).

It belongs to the UPF0482 family.

In Escherichia coli O127:H6 (strain E2348/69 / EPEC), this protein is UPF0482 protein YnfB.